The chain runs to 248 residues: Probable transcriptional regulatory protein Ccel_0181 (248 aa).

Belongs to the TACO1 family.

It localises to the cytoplasm. This chain is Probable transcriptional regulatory protein Ccel_0181, found in Ruminiclostridium cellulolyticum (strain ATCC 35319 / DSM 5812 / JCM 6584 / H10) (Clostridium cellulolyticum).